A 375-amino-acid polypeptide reads, in one-letter code: Proclotting enzyme (375 aa).

The first 21 residues, 1-21, serve as a signal peptide directing secretion; the sequence is MLVNNVFSLLCFPLLMSVVRC. A propeptide spanning residues 22–27 is cleaved from the precursor; it reads STLSRQ. Residue Gln-30 is modified to Pyrrolidone carboxylic acid. A Clip domain is found at 39–84; the sequence is LCSNRFTEEGTCKNVLDCRILLQKNDYNLLKESICGFEGITPKVCC. Intrachain disulfides connect Cys-40/Cys-83, Cys-50/Cys-73, and Cys-56/Cys-84. The interval 90–113 is disordered; that stretch reads VISSTQAPPETTTTERPPKQIPPN. 4 disulfides stabilise this stretch: Cys-118-Cys-248, Cys-157-Cys-173, Cys-295-Cys-311, and Cys-322-Cys-351. Asn-122 carries an N-linked (GlcNAc...) asparagine glycan. The region spanning 128-375 is the Peptidase S1 domain; it reads IIGGREAPIG…FLDWIAEHMV (248 aa). The active-site Charge relay system is His-172. Glu-194, Asn-196, Ser-199, and Asp-202 together coordinate Ca(2+). Asp-228 (charge relay system) is an active-site residue. N-linked (GlcNAc...) asparagine glycans are attached at residues Asn-235 and Asn-304. Catalysis depends on Ser-326, which acts as the Charge relay system.

It belongs to the peptidase S1 family. CLIP subfamily. As to quaternary structure, in the active form, heterodimer of a light chain and a heavy chain; disulfide-linked. Forms a covalent heterodimer with intracellular coagulation inhibitor 2/LICI-2. In terms of processing, proteolytically cleaved into its mature active form by serine protease factor B. Cleavage produces a 25 kDa light chain containing the CLIP domain and a catalytic 31 kDa heavy chain which remain covalently associated through an interchain disulfide bond. Proteolytically cleaved by clotting factor G subunit beta. Post-translationally, contains six O-linked carbohydrate chains in the N-terminal light chain. In terms of tissue distribution, expressed in hemocytes (at protein level).

Its subcellular location is the cytoplasmic vesicle. The protein resides in the secretory vesicle. It is found in the secreted. The enzyme catalyses Selective cleavage of 18-Arg-|- and 47-Arg-|- bonds in coagulogen to form coagulin and fragments.. Its activity is regulated as follows. Inhibited by intracellular coagulation inhibitor 2/LICI-2 and to a lesser extent by intracellular coagulation inhibitor 3/LICI-3. Its function is as follows. This enzyme is closely associated with an endotoxin-sensitive hemolymph coagulation system in limulus. Its active form catalyzes the conversion of coagulogen to insoluble coagulin gel. In Tachypleus tridentatus (Japanese horseshoe crab), this protein is Proclotting enzyme.